The primary structure comprises 398 residues: Phosphoglycerate kinase (398 aa).

Substrate contacts are provided by residues 24–26, Arg39, 62–65, Arg121, and Arg154; these read DFN and HFGR. Residues Lys205, Gly296, Glu327, and 354–357 each bind ATP; that span reads GGDS.

The protein belongs to the phosphoglycerate kinase family. In terms of assembly, monomer.

It localises to the cytoplasm. It catalyses the reaction (2R)-3-phosphoglycerate + ATP = (2R)-3-phospho-glyceroyl phosphate + ADP. It participates in carbohydrate degradation; glycolysis; pyruvate from D-glyceraldehyde 3-phosphate: step 2/5. The chain is Phosphoglycerate kinase from Trichodesmium erythraeum (strain IMS101).